The following is a 304-amino-acid chain: Oxygen-dependent coproporphyrinogen-III oxidase (304 aa).

Residue serine 94 coordinates substrate. The a divalent metal cation site is built by histidine 98 and histidine 108. Residue histidine 108 is the Proton donor of the active site. 110–112 (NVR) contributes to the substrate binding site. A divalent metal cation-binding residues include histidine 147 and histidine 177. The interval 242-277 (YVEFNLVYDRGTLFGLQSGGRTESILMSLPPVAHWR) is important for dimerization. 260 to 262 (GGR) provides a ligand contact to substrate.

The protein belongs to the aerobic coproporphyrinogen-III oxidase family. Homodimer. It depends on a divalent metal cation as a cofactor.

It localises to the cytoplasm. It carries out the reaction coproporphyrinogen III + O2 + 2 H(+) = protoporphyrinogen IX + 2 CO2 + 2 H2O. Its pathway is porphyrin-containing compound metabolism; protoporphyrin-IX biosynthesis; protoporphyrinogen-IX from coproporphyrinogen-III (O2 route): step 1/1. Involved in the heme biosynthesis. Catalyzes the aerobic oxidative decarboxylation of propionate groups of rings A and B of coproporphyrinogen-III to yield the vinyl groups in protoporphyrinogen-IX. This Methylococcus capsulatus (strain ATCC 33009 / NCIMB 11132 / Bath) protein is Oxygen-dependent coproporphyrinogen-III oxidase.